The primary structure comprises 233 residues: Nuclear speckle RNA-binding protein A (233 aa).

Disordered regions lie at residues methionine 1–threonine 54, valine 68–valine 92, and phenylalanine 214–arginine 233. The span at glycine 71–asparagine 91 shows a compositional bias: gly residues. In terms of domain architecture, RRM spans asparagine 136 to lysine 222.

Expressed in root meristems, lateral root primordia and root vascular tissues.

The protein resides in the nucleus speckle. Its function is as follows. Alternative splicing (AS) regulator that binds to specific mRNAs and modulates auxin effects on the transcriptome. Displaced from its targets upon binding to AS competitor long non-coding RNA (ASCO-RNA). In Arabidopsis thaliana (Mouse-ear cress), this protein is Nuclear speckle RNA-binding protein A.